Consider the following 293-residue polypeptide: Transcription initiation factor IIB 2 (293 aa).

The TFIIB-type zinc finger occupies 1-31 (MKCPYCKTDNAITYDVEKGMYVCTNCASVIE). Zn(2+)-binding residues include Cys-3, Cys-6, Cys-23, and Cys-26. 2 consecutive repeat copies span residues 107–193 (SILN…ANSI) and 204–285 (EYIP…DIVD).

It belongs to the TFIIB family.

Stabilizes TBP binding to an archaeal box-A promoter. Also responsible for recruiting RNA polymerase II to the pre-initiation complex (DNA-TBP-TFIIB). The protein is Transcription initiation factor IIB 2 of Saccharolobus solfataricus (strain ATCC 35092 / DSM 1617 / JCM 11322 / P2) (Sulfolobus solfataricus).